We begin with the raw amino-acid sequence, 156 residues long: ATP synthase subunit b (156 aa).

Residues 7-27 (LFAQMVVFLILAWFTMKFVWP) form a helical membrane-spanning segment.

Belongs to the ATPase B chain family. F-type ATPases have 2 components, F(1) - the catalytic core - and F(0) - the membrane proton channel. F(1) has five subunits: alpha(3), beta(3), gamma(1), delta(1), epsilon(1). F(0) has three main subunits: a(1), b(2) and c(10-14). The alpha and beta chains form an alternating ring which encloses part of the gamma chain. F(1) is attached to F(0) by a central stalk formed by the gamma and epsilon chains, while a peripheral stalk is formed by the delta and b chains.

It is found in the cell inner membrane. F(1)F(0) ATP synthase produces ATP from ADP in the presence of a proton or sodium gradient. F-type ATPases consist of two structural domains, F(1) containing the extramembraneous catalytic core and F(0) containing the membrane proton channel, linked together by a central stalk and a peripheral stalk. During catalysis, ATP synthesis in the catalytic domain of F(1) is coupled via a rotary mechanism of the central stalk subunits to proton translocation. Its function is as follows. Component of the F(0) channel, it forms part of the peripheral stalk, linking F(1) to F(0). The sequence is that of ATP synthase subunit b from Paraburkholderia phytofirmans (strain DSM 17436 / LMG 22146 / PsJN) (Burkholderia phytofirmans).